The following is a 426-amino-acid chain: LIM/homeobox protein Lhx2 (426 aa).

Residues 14 to 24 show a composition bias toward basic and acidic residues; it reads VIDEMDRRQER. The interval 14–42 is disordered; that stretch reads VIDEMDRRQERGSGISSAIDRGDTETTMP. 2 consecutive LIM zinc-binding domains span residues 52–104 and 114–167; these read CAGC…CKED and CARC…CRLH. Residues 248–268 form a disordered region; that stretch reads DAEHLDRDQPYPSSQKTKRMR. A DNA-binding region (homeobox) is located at residues 264 to 323; that stretch reads TKRMRTSFKHHQLRTMKSYFAINHNPDAKDLKQLAQKTGLTKRVLQVWFQNARAKFRRNL. Positions 305–321 match the Nuclear localization signal motif; that stretch reads KRVLQVWFQNARAKFRR. Residues 326–354 are compositionally biased toward polar residues; sequence QENTGVDKTSDATLQTGTPSGPASELSNA. A disordered region spans residues 326-370; it reads QENTGVDKTSDATLQTGTPSGPASELSNASLSPSSTPTTLTDLTS. Residues 355–370 show a composition bias toward low complexity; that stretch reads SLSPSSTPTTLTDLTS.

As to quaternary structure, interacts (via LIM domains) with CITED2. Interacts with POU4F2. As to expression, found in discrete regions of the developing CNS, primarily in diencephalic and telencephalic structures and a subset of lymphoid tissues. Also found in embryonic spinal cord and fetal liver.

The protein localises to the nucleus. Its function is as follows. Acts as a transcriptional activator. Stimulates the promoter of the alpha-glycoprotein gene. Transcriptional regulatory protein involved in the control of cell differentiation in developing lymphoid and neural cell types. The protein is LIM/homeobox protein Lhx2 (Lhx2) of Rattus norvegicus (Rat).